The chain runs to 631 residues: Eukaryotic translation initiation factor 2-alpha kinase 1 (631 aa).

Residues 1–34 form a disordered region; the sequence is MQGGNSGVRKREEEGGGEGAVAAPPAIDFPAESS. The SIFI-degron signature appears at 85–104; sequence LRSRQVFKLLCQTFIKMGLL. The Protein kinase domain occupies 167–583; the sequence is FEEVAILGKG…AVQLLQSELF (417 aa). ATP is bound by residues 173 to 181 and Lys196; that span reads LGKGGYGRV. A disordered region spans residues 260-301; the sequence is QEEDREQYDVKNDESSSSSIVFAEPTPEKGKRFGESDTENQN. Thr285 is subject to Phosphothreonine. Residues 285–301 are compositionally biased toward basic and acidic residues; it reads TPEKGKRFGESDTENQN. The HRM 1 repeat unit spans residues 410 to 415; the sequence is ACPYVM. Asp442 acts as the Proton acceptor in catalysis. Phosphothreonine; by autocatalysis is present on residues Thr486 and Thr488. At Thr493 the chain carries Phosphothreonine. One copy of the HRM 2 repeat lies at 552 to 557; that stretch reads RCPVQA.

The protein belongs to the protein kinase superfamily. Ser/Thr protein kinase family. GCN2 subfamily. In terms of assembly, synthesized in an inactive form that binds to the N-terminal domain of CDC37. Has to be associated with a multiprotein complex containing Hsp90, CDC37 and PPP5C for maturation and activation by autophosphorylation. The phosphatase PPP5C modulates this activation. Homodimer; homodimerizes in presence of heme, forming a disulfide-linked inactive homodimer. Interacts with DELE1; binds both to full-length DELE1 and processed form of DELE1 (S-DELE1) in response to stress, leading to activate its protein kinase activity and trigger the integrated stress response (ISR). In terms of processing, activated by autophosphorylation; phosphorylated predominantly on serine and threonine residues, but also on tyrosine residues. Autophosphorylation at Thr-488 is required for kinase activation. The active autophosphorylated form apparently is largely refractory to cellular heme fluctuations. Ubiquitinated and degraded by the SIFI complex once the mitochondrial stress has been resolved, thereby providing stress response silencing. Within the SIFI complex, UBR4 initiates ubiquitin chain that are further elongated or branched by KCMF1.

Its subcellular location is the cytoplasm. It catalyses the reaction L-seryl-[protein] + ATP = O-phospho-L-seryl-[protein] + ADP + H(+). It carries out the reaction L-threonyl-[protein] + ATP = O-phospho-L-threonyl-[protein] + ADP + H(+). With respect to regulation, in normal conditions, the protein kinase activity is inhibited; inhibition is relieved by various stress conditions. Inhibited by heme: in presence of heme, forms a disulfide-linked inactive homodimer. Heme depletion relieves inhibition and stimulates kinase activity by autophosphorylation. Inhibited by the heme metabolites biliverdin and bilirubin. Induced by oxidative stress generated by arsenite treatment. Binding of nitric oxide (NO) to the heme iron in the N-terminal heme-binding domain activates the kinase activity, while binding of carbon monoxide (CO) suppresses kinase activity. Protein kinase activity is also activated upon binding to DELE1 in response to various stress, triggering the integrated stress response (ISR): activated by full-length DELE1 in response to iron deficiency, while it is activated by the processed form of DELE1 (S-DELE1) in response to mitochondrial stress. Metabolic-stress sensing protein kinase that phosphorylates the alpha subunit of eukaryotic translation initiation factor 2 (EIF2S1/eIF-2-alpha) in response to various stress conditions. Key activator of the integrated stress response (ISR) required for adaptation to various stress, such as heme deficiency, oxidative stress, osmotic shock, mitochondrial dysfunction and heat shock. EIF2S1/eIF-2-alpha phosphorylation in response to stress converts EIF2S1/eIF-2-alpha in a global protein synthesis inhibitor, leading to a global attenuation of cap-dependent translation, while concomitantly initiating the preferential translation of ISR-specific mRNAs, such as the transcriptional activator ATF4, and hence allowing ATF4-mediated reprogramming. Acts as a key sensor of heme-deficiency: in normal conditions, binds hemin via a cysteine thiolate and histidine nitrogenous coordination, leading to inhibit the protein kinase activity. This binding occurs with moderate affinity, allowing it to sense the heme concentration within the cell: heme depletion relieves inhibition and stimulates kinase activity, activating the ISR. Thanks to this unique heme-sensing capacity, plays a crucial role to shut off protein synthesis during acute heme-deficient conditions. In red blood cells (RBCs), controls hemoglobin synthesis ensuring a coordinated regulation of the synthesis of its heme and globin moieties. It thereby plays an essential protective role for RBC survival in anemias of iron deficiency. Iron deficiency also triggers activation by full-length DELE1. Also activates the ISR in response to mitochondrial dysfunction: HRI/EIF2AK1 protein kinase activity is activated upon binding to the processed form of DELE1 (S-DELE1), thereby promoting the ATF4-mediated reprogramming. Also acts as an activator of mitophagy in response to mitochondrial damage: catalyzes phosphorylation of eIF-2-alpha (EIF2S1) following activation by S-DELE1, thereby promoting mitochondrial localization of EIF2S1, triggering PRKN-independent mitophagy. This Macaca fascicularis (Crab-eating macaque) protein is Eukaryotic translation initiation factor 2-alpha kinase 1.